An 83-amino-acid chain; its full sequence is Small ribosomal subunit protein bS16 (83 aa).

Belongs to the bacterial ribosomal protein bS16 family.

This Finegoldia magna (strain ATCC 29328 / DSM 20472 / WAL 2508) (Peptostreptococcus magnus) protein is Small ribosomal subunit protein bS16.